We begin with the raw amino-acid sequence, 555 residues long: MGIHSSAENVALENVRQSVTYHPSVWGDYFLTPASNHEESSTSEGEELQESRQEVEKLLGATHDDSLQKLELIDAIQRLGVDHHFQKEIEKSLQDIYLRCCNDKDDYDHNQTDLHTVALRFRLLRQQGYNISSETFNKFTDRNGKFEESLADDVRGMLSLYEAAHCGVQGEKILDEALVFSSSNLKSILAKNHMSNSGLTARIEEAFDTPIRKCLTNFGARKFMSMYEEDESHSEALLKFARLDFNFSQKLHQKEISDLTRWWKELDFKTKLPFARDRMVECYCWTLGIHPEPQYNLARNFLSKVIMLASVIDDIYDVRGTLDELQLFTDAIQRWDISAMEQLPPYMRVCYEALLNVYAEVEELERIDGPYRVHYAKEEMKKLARAYLEESQWLYKKYIPTFKEYMSVAIPSSGYIMVAGNCLVGLGNSLVMKDFDWVSCEPLMVKASAIIARLMDDMAGHGFEKKISAVECYTNENGASEKEAFEELEKQVSNAWKDMNQEFLHPTAVSMTVLTRVLNAARVIHLLYKDGDSYTNSKTYIKELIEAVLIQPVKI.

Residues Asp313, Asp317, Asp456, and Glu464 each contribute to the Mg(2+) site. Positions 313–317 (DDIYD) match the DDXXD motif motif.

The protein belongs to the terpene synthase family. It depends on Mg(2+) as a cofactor.

The catalysed reaction is (2E,6E)-farnesyl diphosphate = (+)-(E)-beta-caryophyllene + diphosphate. The protein operates within secondary metabolite biosynthesis; terpenoid biosynthesis. Functionally, sesquiterpene synthase converting farnesyl diphosphate to beta-caryophyllene as the major product. This chain is Beta-caryophyllene synthase, found in Phyla dulcis (Aztec sweet herb).